The primary structure comprises 110 residues: uncharacterized protein (110 aa).

A run of 2 helical transmembrane segments spans residues 6–26 and 38–58; these read VSLYILCFALGLRNTFLIYNV and TSGPIGDTIFLIYGIIIIIGP.

The protein localises to the membrane. This is an uncharacterized protein from Saccharomyces cerevisiae (strain ATCC 204508 / S288c) (Baker's yeast).